The sequence spans 152 residues: TOMM20-like protein 1 (152 aa).

The Mitochondrial intermembrane segment spans residues 1–9 (MPSVRSLLR). A helical membrane pass occupies residues 10-29 (LLAAAAACGAFAFLGYCIYL). Topologically, residues 30–152 (NRKRRGDPAF…EQDCLEDDPD (123 aa)) are cytoplasmic. Residues 43 to 62 (LRDKRRAEPQKAEEQGTQLW) are disordered. Basic and acidic residues predominate over residues 47–56 (RRAEPQKAEE).

It belongs to the Tom20 family.

It is found in the mitochondrion outer membrane. The sequence is that of TOMM20-like protein 1 (TOMM20L) from Homo sapiens (Human).